Consider the following 145-residue polypeptide: Transcriptional regulator MraZ (145 aa).

SpoVT-AbrB domains lie at 5–47 (EHQH…PLPE) and 76–119 (AVEC…AKDQ).

Belongs to the MraZ family. As to quaternary structure, forms oligomers.

It is found in the cytoplasm. The protein resides in the nucleoid. This chain is Transcriptional regulator MraZ, found in Pelotomaculum thermopropionicum (strain DSM 13744 / JCM 10971 / SI).